A 450-amino-acid polypeptide reads, in one-letter code: 3-phosphoshikimate 1-carboxyvinyltransferase (450 aa).

Residues Lys28, Ser29, and Arg33 each coordinate 3-phosphoshikimate. Residue Lys28 coordinates phosphoenolpyruvate. Phosphoenolpyruvate is bound by residues Gly100 and Arg128. Residues Ser173, Gln175, Asp326, and Lys353 each coordinate 3-phosphoshikimate. Gln175 is a binding site for phosphoenolpyruvate. Asp326 (proton acceptor) is an active-site residue. The phosphoenolpyruvate site is built by Arg357 and Arg402.

Belongs to the EPSP synthase family. Monomer.

The protein localises to the cytoplasm. It catalyses the reaction 3-phosphoshikimate + phosphoenolpyruvate = 5-O-(1-carboxyvinyl)-3-phosphoshikimate + phosphate. It participates in metabolic intermediate biosynthesis; chorismate biosynthesis; chorismate from D-erythrose 4-phosphate and phosphoenolpyruvate: step 6/7. In terms of biological role, catalyzes the transfer of the enolpyruvyl moiety of phosphoenolpyruvate (PEP) to the 5-hydroxyl of shikimate-3-phosphate (S3P) to produce enolpyruvyl shikimate-3-phosphate and inorganic phosphate. This is 3-phosphoshikimate 1-carboxyvinyltransferase from Brucella abortus biovar 1 (strain 9-941).